Here is a 306-residue protein sequence, read N- to C-terminus: MSQDRLLRNVISVMIMAGYEVSEVFAMRPKSFDIIAGNGERIVVLKVISHIDSISEENARDLDRIARNLDGTPLIVGERARDAELERGAVYVRYGIFAINYPTLHDYFVEDSPPLIYASPGGLYVNISGERLRELRETRSLSLGDLGQILGVSRRTVAKYEAGMGTTIEIALRIEETFDSGVIEPIDLIQSKSQFTKPEMPEVPEEIPIQAAIEEMGMHVQPMYHAPFQALVRYDSHTILTGYGSAQKVARRAGIIGNISQVTRTHAMCVMTDDQRQRRIGRTLMIGEDSLLSLDEPDDLINLILN.

An HTH cro/C1-type domain is found at 132-189 (LRELRETRSLSLGDLGQILGVSRRTVAKYEAGMGTTIEIALRIEETFDSGVIEPIDLI). Positions 143–162 (LGDLGQILGVSRRTVAKYEA) form a DNA-binding region, H-T-H motif.

In Methanospirillum hungatei JF-1 (strain ATCC 27890 / DSM 864 / NBRC 100397 / JF-1), this protein is Putative HTH-type transcriptional regulatory protein Mhun_2548.